We begin with the raw amino-acid sequence, 164 residues long: Pathogenesis-related protein PRB1-2 (164 aa).

Positions 1-24 (MQTPKLAILLALAMAAAMVNLSQA) are cleaved as a signal peptide. Pyrrolidone carboxylic acid is present on Gln-25. The region spanning 34 to 152 (PHNAARSAVG…NRGVFITCNY (119 aa)) is the SCP domain. Disulfide bonds link Cys-68–Cys-140, Cys-113–Cys-119, and Cys-135–Cys-150.

It belongs to the CRISP family.

Probably involved in the defense reaction of plants against pathogens. The protein is Pathogenesis-related protein PRB1-2 of Hordeum vulgare (Barley).